Here is a 349-residue protein sequence, read N- to C-terminus: Nuclear distribution protein nudE homolog 1-B (349 aa).

A coiled-coil region spans residues 22–189 (VAMKYKQCSE…ELAVQQKQEK (168 aa)).

It belongs to the nudE family. As to quaternary structure, self-associates. Interacts with pafah1b1. Phosphorylated in mitosis.

It localises to the cytoplasm. The protein localises to the cytoskeleton. It is found in the microtubule organizing center. Its subcellular location is the centrosome. The protein resides in the spindle. It localises to the chromosome. The protein localises to the centromere. It is found in the kinetochore. Its subcellular location is the cleavage furrow. The protein resides in the cytoplasmic vesicle membrane. Functionally, required for centrosome duplication and formation and function of the mitotic spindle. This Xenopus laevis (African clawed frog) protein is Nuclear distribution protein nudE homolog 1-B (nde1-b).